The following is a 319-amino-acid chain: MISRLLQNNLMSVDPVSSQAMELSDVTLIEGVGNEVMVVAGVVALTLALVLAWLSTYVADSGNNQLLGTIVSAGDTSVLHLGHVDQLVNQGTPEPTEHPHPSGGNDDKAEETSDSGGDATGEPGARGEMEPSLEHLLDIQGLPKRQAGLGSSRPEAPLGLDDGSCLSPSPSLINVRLKFLNDTEELAVARPEDTVGTLKSKYFPGQESQMKLIYQGRLLQDPARTLSSLNITNNCVIHCHRSPPGAAVSGPSASLTPTTEQSSLGVNVGSLMVPVFVVLLGVVWYFRINYRQFFTGPATISLVGVTVFFSILVFGMYGR.

A helical membrane pass occupies residues 36-56; the sequence is VMVVAGVVALTLALVLAWLST. Disordered regions lie at residues 88–128 and 145–165; these read VNQG…ARGE and RQAGLGSSRPEAPLGLDDGSC. Residues 95–111 show a composition bias toward basic and acidic residues; that stretch reads PTEHPHPSGGNDDKAEE. Positions 173-246 constitute a Ubiquitin-like domain; the sequence is INVRLKFLND…IHCHRSPPGA (74 aa). The next 2 membrane-spanning stretches (helical) occupy residues 264-284 and 298-318; these read LGVNVGSLMVPVFVVLLGVVW and ATISLVGVTVFFSILVFGMYG.

The protein localises to the membrane. This chain is Transmembrane and ubiquitin-like domain-containing protein 2 (Tmub2), found in Mus musculus (Mouse).